Consider the following 214-residue polypeptide: ER lumen protein-retaining receptor 3 (214 aa).

The Lumenal segment spans residues 1-4 (MNIF). A helical transmembrane segment spans residues 5–24 (RILGDVSHLLAIIILLLKMW). The Cytoplasmic segment spans residues 25-32 (KSKSCAGI). A helical membrane pass occupies residues 33–52 (SGKSQLLFALVFTTRYLDLF). Residues 47–48 (RY) are interaction with the K-D-E-L motif on target proteins. Residues 53-58 (TVFISP) lie on the Lumenal side of the membrane. The chain crosses the membrane as a helical span at residues 59 to 79 (YNTVMKIIFLACAYVTVYLIY). The Cytoplasmic segment spans residues 80–92 (GKLRKSYDSENDT). Residues 93–110 (FRLEFLLVPVIGLSFLEN) traverse the membrane as a helical segment. Over 111-116 (YEFTPL) the chain is Lumenal. A helical transmembrane segment spans residues 117 to 135 (EILWTFSIYLESVAILPQL). Residues 136–149 (FMISKTGEAESITT) are Cytoplasmic-facing. Residues 150–168 (HYLFFLGLYRVLYLANWIW) form a helical membrane-spanning segment. The tract at residues 159 to 169 (RVLYLANWIWR) is interaction with the K-D-E-L motif on target proteins. Residues 169-178 (RYHTEKFYDQ) lie on the Lumenal side of the membrane. A helical membrane pass occupies residues 179 to 199 (IAVVSGVVQTIFYFDFFYLYV). At 200-214 (TKVLKGKKLSLPMPV) the chain is on the cytoplasmic side. An important for recycling of cargo proteins with the sequence motif K-D-E-L from the Golgi to the endoplasmic reticulum region spans residues 204-207 (KGKK).

Belongs to the ERD2 family.

Its subcellular location is the endoplasmic reticulum membrane. It localises to the golgi apparatus membrane. It is found in the cytoplasmic vesicle. The protein localises to the COPI-coated vesicle membrane. In terms of biological role, receptor for the C-terminal sequence motif K-D-E-L that is present on endoplasmic reticulum resident proteins and that mediates their recycling from the Golgi back to the endoplasmic reticulum. The sequence is that of ER lumen protein-retaining receptor 3 (kdelr3) from Xenopus laevis (African clawed frog).